The primary structure comprises 119 residues: Large ribosomal subunit protein P3z (119 aa).

Over residues 79–90 the composition is skewed to gly residues; it reads AGGAASSGGGAG. Residues 79–119 form a disordered region; sequence AGGAASSGGGAGEAAAAPKEDEKKKEESEEEEGDFGFDLFG. Basic and acidic residues predominate over residues 96 to 105; the sequence is PKEDEKKKEE.

It belongs to the eukaryotic ribosomal protein P1/P2 family. Phosphorylated.

Its function is as follows. Plays an important role in the elongation step of protein synthesis. The sequence is that of Large ribosomal subunit protein P3z (RPP3A) from Arabidopsis thaliana (Mouse-ear cress).